The chain runs to 275 residues: Translation initiation factor 2 subunit alpha (275 aa).

One can recognise an S1 motif domain in the interval G12–K83.

This sequence belongs to the eIF-2-alpha family. In terms of assembly, heterotrimer composed of an alpha, a beta and a gamma chain.

Its function is as follows. eIF-2 functions in the early steps of protein synthesis by forming a ternary complex with GTP and initiator tRNA. The chain is Translation initiation factor 2 subunit alpha from Thermococcus onnurineus (strain NA1).